The following is a 474-amino-acid chain: Synaptotagmin-15B (474 aa).

Disordered stretches follow at residues 1–62 (MGVV…AASG) and 75–128 (PRAA…PPAV). A compositionally biased stretch (low complexity) spans 75 to 88 (PRAAAGHQQHHGPP). 2 consecutive C2 domains span residues 200-317 (CLGR…RRVI) and 331-452 (EFGD…EHWD).

The protein belongs to the synaptotagmin family.

The polypeptide is Synaptotagmin-15B (Homo sapiens (Human)).